The primary structure comprises 78 residues: Small integral membrane protein 1 (78 aa).

An N-acetylmethionine modification is found at methionine 1. Residues 1 to 22 (MQSQESGVHYSRWDSSSRDEVS) are disordered. Topologically, residues 1-48 (MQSQESGVHYSRWDSSSRDEVSMTAMSSSEEASCYRRISQKLCSGKLG) are cytoplasmic. Phosphoserine is present on residues serine 6, serine 17, serine 22, and serine 27. Basic and acidic residues predominate over residues 11 to 21 (SRWDSSSRDEV). The chain crosses the membrane as a helical; Signal-anchor for type II membrane protein span at residues 49-69 (IAMKVLGGVALFWIIFILGYI). Residues 70–78 (TGYYVHKCK) are Extracellular-facing.

This sequence belongs to the SMIM1 family. Homooligomer; disulfide-linked.

Its subcellular location is the cell membrane. Its function is as follows. Regulator of red blood cell formation. In Mus musculus (Mouse), this protein is Small integral membrane protein 1.